We begin with the raw amino-acid sequence, 197 residues long: Phospholipid hydroperoxide glutathione peroxidase (197 aa).

Ser40 carries the post-translational modification Phosphoserine. Sec73 is a catalytic residue. A non-standard amino acid (selenocysteine) is located at residue Sec73.

It belongs to the glutathione peroxidase family. In terms of assembly, monomer. Has a tendency to form higher mass oligomers. Interacts with FUNDC1; this interaction promotes GPX4 recruitment into mitochondria through TOM/TIM complex where it is degraded by mitophagy.

The protein localises to the mitochondrion. The protein resides in the cytoplasm. It carries out the reaction a hydroperoxy polyunsaturated fatty acid + 2 glutathione = a hydroxy polyunsaturated fatty acid + glutathione disulfide + H2O. The catalysed reaction is 2 glutathione + H2O2 = glutathione disulfide + 2 H2O. It catalyses the reaction tert-butyl hydroperoxide + 2 glutathione = tert-butanol + glutathione disulfide + H2O. The enzyme catalyses cumene hydroperoxide + 2 glutathione = 2-phenylpropan-2-ol + glutathione disulfide + H2O. It carries out the reaction (9S)-hydroperoxy-(10E,12Z)-octadecadienoate + 2 glutathione = (9S)-hydroxy-(10E,12Z)-octadecadienoate + glutathione disulfide + H2O. The catalysed reaction is (13S)-hydroperoxy-(9Z,11E)-octadecadienoate + 2 glutathione = (13S)-hydroxy-(9Z,11E)-octadecadienoate + glutathione disulfide + H2O. It catalyses the reaction (5S)-hydroperoxy-(6E,8Z,11Z,14Z)-eicosatetraenoate + 2 glutathione = (5S)-hydroxy-(6E,8Z,11Z,14Z)-eicosatetraenoate + glutathione disulfide + H2O. The enzyme catalyses (12R)-hydroperoxy-(5Z,8Z,10E,14Z)-eicosatetraenoate + 2 glutathione = (12R)-hydroxy-(5Z,8Z,10E,14Z)-eicosatetraenoate + glutathione disulfide + H2O. It carries out the reaction (12S)-hydroperoxy-(5Z,8Z,10E,14Z)-eicosatetraenoate + 2 glutathione = (12S)-hydroxy-(5Z,8Z,10E,14Z)-eicosatetraenoate + glutathione disulfide + H2O. The catalysed reaction is (15S)-hydroperoxy-(5Z,8Z,11Z,13E)-eicosatetraenoate + 2 glutathione = (15S)-hydroxy-(5Z,8Z,11Z,13E)-eicosatetraenoate + glutathione disulfide + H2O. It catalyses the reaction (5S)-hydroperoxy-(6E,8Z,11Z,14Z,17Z)-eicosapentaenoate + 2 glutathione = (5S)-hydroxy-(6E,8Z,11Z,14Z,17Z)-eicosapentaenoate + glutathione disulfide + H2O. The enzyme catalyses (12S)-hydroperoxy-(5Z,8Z,10E,14Z,17Z)-eicosapentaenoate + 2 glutathione = (12S)-hydroxy-(5Z,8Z,10E,14Z,17Z)-eicosapentaenoate + glutathione disulfide + H2O. It carries out the reaction (15S)-hydroperoxy-(5Z,8Z,11Z,13E,17Z)-eicosapentaenoate + 2 glutathione = (15S)-hydroxy-(5Z,8Z,11Z,13E,17Z)-eicosapentaenoate + glutathione disulfide + H2O. The catalysed reaction is (15S)-hydroperoxy-(11Z,13E)-eicosadienoate + 2 glutathione = (15S)-hydroxy-(11Z,13E)-eicosadienoate + glutathione disulfide + H2O. It catalyses the reaction (17S)-hydroperoxy-(4Z,7Z,10Z,13Z,15E,19Z)-docosahexaenoate + 2 glutathione = (17S)-hydroxy-(4Z,7Z,10Z,13Z,15E,19Z)-docosahexaenoate + glutathione disulfide + H2O. The enzyme catalyses a hydroperoxy-1,2-diacyl-glycero-3-phosphocholine + 2 glutathione = a hydroxy-1,2-diacyl-glycero-3-phosphocholine + glutathione disulfide + H2O. Functionally, essential antioxidant peroxidase that directly reduces phospholipid hydroperoxide even if they are incorporated in membranes and lipoproteins. Can also reduce fatty acid hydroperoxide, cholesterol hydroperoxide and thymine hydroperoxide. Plays a key role in protecting cells from oxidative damage by preventing membrane lipid peroxidation. Required to prevent cells from ferroptosis, a non-apoptotic cell death resulting from an iron-dependent accumulation of lipid reactive oxygen species. The presence of selenocysteine (Sec) versus Cys at the active site is essential for life: it provides resistance to overoxidation and prevents cells against ferroptosis. The presence of Sec at the active site is also essential for the survival of a specific type of parvalbumin-positive interneurons, thereby preventing against fatal epileptic seizures. May be required to protect cells from the toxicity of ingested lipid hydroperoxides. Required for normal sperm development and male fertility. Essential for maturation and survival of photoreceptor cells. Plays a role in a primary T-cell response to viral and parasitic infection by protecting T-cells from ferroptosis and by supporting T-cell expansion. Plays a role of glutathione peroxidase in platelets in the arachidonic acid metabolism. Reduces hydroperoxy ester lipids formed by a 15-lipoxygenase that may play a role as down-regulator of the cellular 15-lipoxygenase pathway. Can also reduce small soluble hydroperoxides such as H2O2, cumene hydroperoxide and tert-butyl hydroperoxide. The chain is Phospholipid hydroperoxide glutathione peroxidase from Sus scrofa (Pig).